The primary structure comprises 137 residues: MKEVNLVLGVIGADVHAIGNKILEYALTNAGFKVHNLGVMVSQEEFVKAALETDAKAVLVSSLYGHGEIDCRGLKEKFIEAGLDDVLLYVGGNLVVGKQDFSEVERKFKAMGFDRVFPPGTMPEEAIKALKEDLGLM.

The region spanning 3-137 is the B12-binding domain; sequence EVNLVLGVIG…KALKEDLGLM (135 aa). Residues 13-17, His16, 61-63, and 93-97 contribute to the adenosylcob(III)alamin site; these read ADVHA, SSL, and NLVVG.

It belongs to the methylaspartate mutase GlmS subunit family. Heterotetramer composed of 2 epsilon subunits (GlmE) and 2 sigma subunits (GlmS). GlmE exists as a homodimer and GlmS as a monomer. Requires adenosylcob(III)alamin as cofactor.

It carries out the reaction (2S,3S)-3-methyl-L-aspartate = L-glutamate. Its pathway is amino-acid degradation; L-glutamate degradation via mesaconate pathway; acetate and pyruvate from L-glutamate: step 1/4. Functionally, catalyzes the carbon skeleton rearrangement of L-glutamate to L-threo-3-methylaspartate ((2S,3S)-3-methylaspartate). The chain is Glutamate mutase sigma subunit from Carboxydothermus hydrogenoformans (strain ATCC BAA-161 / DSM 6008 / Z-2901).